We begin with the raw amino-acid sequence, 702 residues long: Elongation factor G (702 aa).

The region spanning Asp-8–Leu-286 is the tr-type G domain. GTP-binding positions include Ala-17 to Thr-24, Asp-85 to His-89, and Asn-139 to Asp-142.

It belongs to the TRAFAC class translation factor GTPase superfamily. Classic translation factor GTPase family. EF-G/EF-2 subfamily.

It is found in the cytoplasm. Functionally, catalyzes the GTP-dependent ribosomal translocation step during translation elongation. During this step, the ribosome changes from the pre-translocational (PRE) to the post-translocational (POST) state as the newly formed A-site-bound peptidyl-tRNA and P-site-bound deacylated tRNA move to the P and E sites, respectively. Catalyzes the coordinated movement of the two tRNA molecules, the mRNA and conformational changes in the ribosome. In Chloroflexus aggregans (strain MD-66 / DSM 9485), this protein is Elongation factor G.